Reading from the N-terminus, the 55-residue chain is Serine protease inhibitor Kazal-type 1 (55 aa).

The Kazal-like domain maps to 2 to 55; the sequence is QGRDANCNYEFPGCPRNLEPVCGTDGNTYNNECLLCMENKKRDVPIRIQKDGPC. 3 cysteine pairs are disulfide-bonded: Cys-8/Cys-37, Cys-15/Cys-34, and Cys-23/Cys-55.

The protein localises to the secreted. Its function is as follows. Serine protease inhibitor which exhibits anti-trypsin activity. In the pancreas, protects against trypsin-catalyzed premature activation of zymogens. In the male reproductive tract, binds to sperm heads where it modulates sperm capacitance by inhibiting calcium uptake and nitrogen oxide (NO) production. The protein is Serine protease inhibitor Kazal-type 1 (SPINK1) of Monodelphis domestica (Gray short-tailed opossum).